The sequence spans 263 residues: Proliferating cell nuclear antigen (263 aa).

Residues 61-80 (RCDRNLSMGMNLNNMAKMLR) mediate DNA binding.

The protein belongs to the PCNA family. In terms of assembly, homotrimer. Interacts with FEN1A. Interacts with POLL. Interacts with RAD/GEN1. Interacts with DJA7 and DJA8. Expressed in proliferating tissues. Expressed in roots and root apex. Expressed at low levels in young leaves. Not detected in mature leaves. Highly expressed in shoot apical meristem (SAM). Expressed in flag leaves and panicles.

It localises to the nucleus. This protein is an auxiliary protein of DNA polymerase delta and is involved in the control of eukaryotic DNA replication by increasing the polymerase's processibility during elongation of the leading strand. The polypeptide is Proliferating cell nuclear antigen (Oryza sativa subsp. japonica (Rice)).